The primary structure comprises 266 residues: Undecaprenyl-diphosphatase (266 aa).

The next 8 membrane-spanning stretches (helical) occupy residues 1–21 (MTLF…FLPI), 39–59 (QGLA…MIYF), 87–107 (WYVI…KGWI), 113–133 (TALV…YADA), 143–163 (GLTL…LIPG), 187–207 (FSFL…TLDL), 218–238 (ALLY…YLFL), and 244–264 (IGML…LWFV).

Belongs to the UppP family.

The protein resides in the cell inner membrane. It catalyses the reaction di-trans,octa-cis-undecaprenyl diphosphate + H2O = di-trans,octa-cis-undecaprenyl phosphate + phosphate + H(+). Its function is as follows. Catalyzes the dephosphorylation of undecaprenyl diphosphate (UPP). Confers resistance to bacitracin. The sequence is that of Undecaprenyl-diphosphatase from Alteromonas mediterranea (strain DSM 17117 / CIP 110805 / LMG 28347 / Deep ecotype).